A 299-amino-acid polypeptide reads, in one-letter code: Ribosomal protein uL3 glutamine methyltransferase (299 aa).

The protein belongs to the protein N5-glutamine methyltransferase family. PrmB subfamily.

It carries out the reaction L-glutaminyl-[ribosomal protein uL3] + S-adenosyl-L-methionine = N(5)-methyl-L-glutaminyl-[ribosomal protein uL3] + S-adenosyl-L-homocysteine + H(+). Methylates large ribosomal subunit protein uL3 on a specific glutamine residue. This is Ribosomal protein uL3 glutamine methyltransferase from Neisseria gonorrhoeae (strain ATCC 700825 / FA 1090).